A 533-amino-acid chain; its full sequence is Putative amidase C550.07 (533 aa).

Residues K132 and S207 each act as charge relay system in the active site. S231 functions as the Acyl-ester intermediate in the catalytic mechanism.

This sequence belongs to the amidase family.

It is found in the cytoplasm. The protein resides in the nucleus. It carries out the reaction a monocarboxylic acid amide + H2O = a monocarboxylate + NH4(+). The protein is Putative amidase C550.07 of Schizosaccharomyces pombe (strain 972 / ATCC 24843) (Fission yeast).